Consider the following 265-residue polypeptide: 14-3-3-like protein GF14-D (265 aa).

A disordered region spans residues 244–265; it reads DANDDGGDEIKEAAAPKEPGDQ. Residues 251 to 265 are compositionally biased toward basic and acidic residues; that stretch reads DEIKEAAAPKEPGDQ.

The protein belongs to the 14-3-3 family. Interacts with BZR1. Interacts with ABI5.

Functionally, is associated with a DNA binding complex that binds to the G box, a well-characterized cis-acting DNA regulatory element found in plant genes. This Oryza sativa subsp. japonica (Rice) protein is 14-3-3-like protein GF14-D (GF14D).